The following is a 460-amino-acid chain: Argininosuccinate lyase (460 aa).

Belongs to the lyase 1 family. Argininosuccinate lyase subfamily.

The protein resides in the cytoplasm. It carries out the reaction 2-(N(omega)-L-arginino)succinate = fumarate + L-arginine. It participates in amino-acid biosynthesis; L-arginine biosynthesis; L-arginine from L-ornithine and carbamoyl phosphate: step 3/3. The sequence is that of Argininosuccinate lyase from Lawsonia intracellularis (strain PHE/MN1-00).